The following is a 438-amino-acid chain: Minor myo-inositol transporter IolF (438 aa).

A run of 12 helical transmembrane segments spans residues I15–L35, I49–G69, M86–L106, G108–A128, W147–L167, I171–P191, I230–F250, L268–F288, T295–L312, G317–A334, L359–I379, and M387–P407.

Belongs to the major facilitator superfamily. Sugar transporter (TC 2.A.1.1) family.

Its subcellular location is the cell membrane. Its pathway is polyol metabolism; myo-inositol degradation into acetyl-CoA. Minor myo-inositol uptake transporter. This is Minor myo-inositol transporter IolF (iolF) from Bacillus subtilis (strain 168).